The following is a 562-amino-acid chain: NAD-dependent malic enzyme (562 aa).

Y101 (proton donor) is an active-site residue. R154 contacts NAD(+). K172 serves as the catalytic Proton acceptor. A divalent metal cation contacts are provided by E243, D244, and D267. The NAD(+) site is built by D267 and N415.

Belongs to the malic enzymes family. In terms of assembly, homotetramer. Mg(2+) serves as cofactor. Requires Mn(2+) as cofactor.

It catalyses the reaction (S)-malate + NAD(+) = pyruvate + CO2 + NADH. It carries out the reaction oxaloacetate + H(+) = pyruvate + CO2. This is NAD-dependent malic enzyme from Shewanella sp. (strain ANA-3).